Reading from the N-terminus, the 123-residue chain is Small ribosomal subunit protein uS12cz/uS12cy (123 aa).

This sequence belongs to the universal ribosomal protein uS12 family. As to quaternary structure, part of the 30S ribosomal subunit.

It is found in the plastid. The protein localises to the chloroplast. In terms of biological role, with S4 and S5 plays an important role in translational accuracy. Located at the interface of the 30S and 50S subunits. The polypeptide is Small ribosomal subunit protein uS12cz/uS12cy (rps12-A) (Arabis hirsuta (Hairy rock-cress)).